The chain runs to 953 residues: 2-oxoglutarate dehydrogenase E1 component (953 aa).

Belongs to the alpha-ketoglutarate dehydrogenase family. As to quaternary structure, homodimer. Part of the 2-oxoglutarate dehydrogenase (OGDH) complex composed of E1 (2-oxoglutarate dehydrogenase), E2 (dihydrolipoamide succinyltransferase) and E3 (dihydrolipoamide dehydrogenase); the complex contains multiple copies of the three enzymatic components (E1, E2 and E3). Thiamine diphosphate serves as cofactor.

The catalysed reaction is N(6)-[(R)-lipoyl]-L-lysyl-[protein] + 2-oxoglutarate + H(+) = N(6)-[(R)-S(8)-succinyldihydrolipoyl]-L-lysyl-[protein] + CO2. Functionally, E1 component of the 2-oxoglutarate dehydrogenase (OGDH) complex which catalyzes the decarboxylation of 2-oxoglutarate, the first step in the conversion of 2-oxoglutarate to succinyl-CoA and CO(2). This is 2-oxoglutarate dehydrogenase E1 component from Oceanobacillus iheyensis (strain DSM 14371 / CIP 107618 / JCM 11309 / KCTC 3954 / HTE831).